The chain runs to 422 residues: Phospholipase D Z (422 aa).

Positions 1–18 (MMMKLLFLIALFGCVVNS) are cleaved as a signal peptide. Residue Asn-53 is glycosylated (N-linked (GlcNAc...) asparagine). The PLD phosphodiesterase 1 domain maps to 148 to 175 (GAGILHTKVIVVDQVSAYLGSANLDWRS). Active-site residues include His-153, Lys-155, and Asp-160. N-linked (GlcNAc...) asparagine glycans are attached at residues Asn-225 and Asn-320. A PLD phosphodiesterase 2 domain is found at 357 to 383 (FTRVNHAKYMVTDEQSYVGTSNWSEDY). Catalysis depends on residues His-362, Lys-364, and Asp-369. The N-linked (GlcNAc...) asparagine glycan is linked to Asn-378.

This sequence belongs to the phospholipase D family.

It catalyses the reaction a 1,2-diacyl-sn-glycero-3-phosphocholine + H2O = a 1,2-diacyl-sn-glycero-3-phosphate + choline + H(+). Its activity is regulated as follows. Inhibited by butan-1-ol. Its function is as follows. Hydrolyzes membrane phospholipids, such as PtdCho (phosphatidylcholine), producing the free headgroup and PtdOH (phosphatidic acid; signaling molecule on its own). The chain is Phospholipase D Z (pldZ) from Dictyostelium discoideum (Social amoeba).